The sequence spans 363 residues: F-box protein At3g44326 (363 aa).

The interval 1–23 (MLSSSSSSTVEQPSRGGSPGINA) is disordered. Positions 27-66 (DVLRSNILTRLDGSSLAALSCTCSNLNSFCSDESLWRQQC) constitute an F-box domain.

The sequence is that of F-box protein At3g44326 from Arabidopsis thaliana (Mouse-ear cress).